The sequence spans 272 residues: uncharacterized protein (272 aa).

The signal sequence occupies residues 1–22 (MEYIKKIALYMSVLLLIIFIGG). C23 carries N-palmitoyl cysteine lipidation. A lipid anchor (S-diacylglycerol cysteine) is attached at C23.

Belongs to the staphylococcal tandem lipoprotein family.

Its subcellular location is the cell membrane. This is an uncharacterized protein from Staphylococcus aureus (strain MRSA252).